The sequence spans 139 residues: Large ribosomal subunit protein bL20 (139 aa).

Belongs to the bacterial ribosomal protein bL20 family.

Functionally, binds directly to 23S ribosomal RNA and is necessary for the in vitro assembly process of the 50S ribosomal subunit. It is not involved in the protein synthesizing functions of that subunit. The polypeptide is Large ribosomal subunit protein bL20 (Leuconostoc mesenteroides subsp. mesenteroides (strain ATCC 8293 / DSM 20343 / BCRC 11652 / CCM 1803 / JCM 6124 / NCDO 523 / NBRC 100496 / NCIMB 8023 / NCTC 12954 / NRRL B-1118 / 37Y)).